The primary structure comprises 463 residues: Nicotinate phosphoribosyltransferase pncB2 (463 aa).

Phosphohistidine is present on His202.

Belongs to the NAPRTase family. Post-translationally, transiently phosphorylated on a His residue during the reaction cycle. Phosphorylation strongly increases the affinity for substrates and increases the rate of nicotinate D-ribonucleotide production. Dephosphorylation regenerates the low-affinity form of the enzyme, leading to product release.

It carries out the reaction nicotinate + 5-phospho-alpha-D-ribose 1-diphosphate + ATP + H2O = nicotinate beta-D-ribonucleotide + ADP + phosphate + diphosphate. Its pathway is cofactor biosynthesis; NAD(+) biosynthesis; nicotinate D-ribonucleotide from nicotinate: step 1/1. Its function is as follows. Involved in the Preiss-Handler pathway, which is a recycling route that permits the salvage of free nicotinamide (NM) and nicotinic acid (Na) involved in the NAD biosynthesis. Catalyzes the synthesis of beta-nicotinate D-ribonucleotide from nicotinate and 5-phospho-D-ribose 1-phosphate at the expense of ATP. It is not able to use nicotinamide. PncB2 appears to be responsible for the increased salvage synthesis of NAD during infection of host tissues. This chain is Nicotinate phosphoribosyltransferase pncB2 (pncB2), found in Mycobacterium tuberculosis (strain CDC 1551 / Oshkosh).